A 378-amino-acid chain; its full sequence is Alkaline elastase YaB (378 aa).

An N-terminal signal peptide occupies residues 1–27 (MNKKMGKIVAGTALIISVAFSSSIAQA). Positions 28-110 (AEEAKEKYLI…IEEDAEVTTM (83 aa)) are excised as a propeptide. Glutamine 111 contacts Ca(2+). In terms of domain architecture, Peptidase S8 spans 114–377 (PWGINRVQAP…SGLVNAEAAT (264 aa)). The active-site Charge relay system is aspartate 141. Aspartate 149 lines the Ca(2+) pocket. Catalysis depends on histidine 171, which acts as the Charge relay system. Residues leucine 182, asparagine 184, isoleucine 186, valine 188, alanine 272, tyrosine 274, and alanine 277 each contribute to the Ca(2+) site. The active-site Charge relay system is the serine 324.

The protein belongs to the peptidase S8 family. Ca(2+) serves as cofactor.

The protein localises to the secreted. In terms of biological role, digests elastin efficiently, has a substrate preference for Ala in P1 position. This chain is Alkaline elastase YaB (ale), found in Bacillus sp. (strain YaB).